Here is a 383-residue protein sequence, read N- to C-terminus: tRNA-specific 2-thiouridylase MnmA (383 aa).

Residues 16 to 23 and leucine 42 each bind ATP; that span reads AMSGGVDS. The Nucleophile role is filled by cysteine 110. Residues cysteine 110 and cysteine 209 are joined by a disulfide bond. Residue glycine 134 participates in ATP binding. The interval 159 to 161 is interaction with tRNA; it reads KDQ. Cysteine 209 (cysteine persulfide intermediate) is an active-site residue.

This sequence belongs to the MnmA/TRMU family.

It is found in the cytoplasm. The catalysed reaction is S-sulfanyl-L-cysteinyl-[protein] + uridine(34) in tRNA + AH2 + ATP = 2-thiouridine(34) in tRNA + L-cysteinyl-[protein] + A + AMP + diphosphate + H(+). Catalyzes the 2-thiolation of uridine at the wobble position (U34) of tRNA, leading to the formation of s(2)U34. This chain is tRNA-specific 2-thiouridylase MnmA, found in Caulobacter vibrioides (strain ATCC 19089 / CIP 103742 / CB 15) (Caulobacter crescentus).